A 484-amino-acid polypeptide reads, in one-letter code: Serine/arginine-rich splicing factor 11 (484 aa).

Residues 1 to 33 (MSNTTVVPSTAGPGPSGGPGGGGGGGGGGGGTE) are disordered. At serine 2 the chain carries N-acetylserine. Over residues 14–32 (GPSGGPGGGGGGGGGGGGT) the composition is skewed to gly residues. In terms of domain architecture, RRM spans 33–113 (EVIQVTNVSP…ALIVVPYAEG (81 aa)). Residue lysine 197 forms a Glycyl lysine isopeptide (Lys-Gly) (interchain with G-Cter in SUMO2) linkage. Phosphoserine is present on serine 207. A Glycyl lysine isopeptide (Lys-Gly) (interchain with G-Cter in SUMO2) cross-link involves residue lysine 211. Serine 212 is modified (phosphoserine). The segment at 233–484 (ISAAIEPDKK…HHEEDMDMSD (252 aa)) is disordered. The span at 244–308 (EKRRHSRSRS…ERGRRSRSTS (65 aa)) shows a compositional bias: basic residues. Tandem repeats lie at residues 247–255 (RHSRSRSRS), 258–265 (RRTPSSSR), 267–274 (RRSRSRSR), 275–282 (RRSHSKSR), 285–292 (RRSKSPRR), 293–300 (RRSHSRER), 302–309 (RRSRSTSK), 321–328 (KRSKTPPK), 334–341 (RRSRSASR), and 346–353 (RRSRSGTR). A 10 X 8 AA approximate repeats of R-R-S-R-S-R-S-R region spans residues 247 to 353 (RHSRSRSRSR…RRRRSRSGTR (107 aa)). The span at 309 to 320 (KTRDKKKEDKEK) shows a compositional bias: basic and acidic residues. The residue at position 323 (serine 323) is a Phosphoserine. Threonine 325 carries the phosphothreonine modification. Positions 334-379 (RRSRSASRERRRRRSRSGTRSPKKPRSPKRKLSRSPSPRRHKKEKK) are enriched in basic residues. Composition is skewed to basic and acidic residues over residues 380-395 (KDKDKERSRDERERST), 402-424 (KDKEKDRERKSESDKDVKQVTRD), and 433-478 (DSEK…HHEE). 2 positions are modified to phosphoserine: serine 414 and serine 434. Threonine 447 is subject to Phosphothreonine. Serine 449, serine 456, serine 464, and serine 483 each carry phosphoserine.

It belongs to the splicing factor SR family. As to quaternary structure, interacts with PUF60.

The protein resides in the nucleus. In terms of biological role, may function in pre-mRNA splicing. This is Serine/arginine-rich splicing factor 11 (SRSF11) from Homo sapiens (Human).